The chain runs to 549 residues: Solute carrier family 22 member 6 (549 aa).

The Cytoplasmic segment spans residues 1 to 23; it reads MAFNDLLLQLGGVGRFQKIQVTL. A helical transmembrane segment spans residues 24–44; it reads VILPLILLASHNTLQNFTAAI. Over 45-135 the chain is Extracellular; that stretch reads PTHHCRPPAD…LVCSHRALRQ (91 aa). Asn-56, Asn-92, and Asn-113 each carry an N-linked (GlcNAc...) asparagine glycan. A helical membrane pass occupies residues 136-156; the sequence is LAQSLYMMGVLLGAMTFGCLA. Residues 157-164 lie on the Cytoplasmic side of the membrane; that stretch reads DRLGRRKV. The chain crosses the membrane as a helical span at residues 165–185; that stretch reads LIFNYLQTAVSGTCAAFAPNF. At 186-195 the chain is on the extracellular side; the sequence is PAYCAFRFLS. Residues 196-216 form a helical membrane-spanning segment; that stretch reads GMSTAGVVLNCMTLNVEWMPI. Residues 217-224 lie on the Cytoplasmic side of the membrane; that stretch reads HTRAYVGT. A helical membrane pass occupies residues 225–245; it reads LTGYVYSLGQFLLAGMAYAVP. At 246–248 the chain is on the extracellular side; sequence HWR. Residues 249–269 traverse the membrane as a helical segment; sequence YLQLLVSAPFFAFFIYSWFFI. Topologically, residues 270-337 are cytoplasmic; it reads ESARWYASSG…ELIRCPALRR (68 aa). The helical transmembrane segment at 338–358 threads the bilayer; the sequence is LFLCLSMLWFATSFAYYGLVM. Over 359–368 the chain is Extracellular; the sequence is DLQGFGVSIY. Residues 369 to 389 traverse the membrane as a helical segment; the sequence is LIQVIFGAVDLPAKLVSFLVI. Over 390–395 the chain is Cytoplasmic; sequence NNVGRR. A helical transmembrane segment spans residues 396-416; that stretch reads PAQMASLLLAGICILINGVVP. The Extracellular portion of the chain corresponds to 417–425; that stretch reads KDKSIVRTS. A helical membrane pass occupies residues 426 to 446; the sequence is LAVLGKGCLASSFNCIFLYTG. The Cytoplasmic portion of the chain corresponds to 447-456; sequence EVYPTMIRQT. The helical transmembrane segment at 457 to 477 threads the bilayer; the sequence is GLGMGSTLARVGSIVSPLVSM. Residues 478–484 lie on the Extracellular side of the membrane; that stretch reads TAELYPS. The chain crosses the membrane as a helical span at residues 485-505; the sequence is VPLFIYGAVPVAASAAIALLP. At 506–549 the chain is on the cytoplasmic side; the sequence is ETLGQPLPDTVQDVENRRRGKTRKQQEELQKQMVPLQASAQVKN. The interval 521 to 549 is disordered; it reads NRRRGKTRKQQEELQKQMVPLQASAQVKN.

It belongs to the major facilitator (TC 2.A.1) superfamily. Organic cation transporter (TC 2.A.1.19) family. Glycosylated. Glycosylation is necessary for proper targeting of the transporter to the plasma membrane.

It is found in the basolateral cell membrane. The protein resides in the basal cell membrane. It carries out the reaction (6R)-L-erythro-5,6,7,8-tetrahydrobiopterin(out) + a dicarboxylate(in) = (6R)-L-erythro-5,6,7,8-tetrahydrobiopterin(in) + a dicarboxylate(out). It catalyses the reaction L-erythro-7,8-dihydrobiopterin(out) + a dicarboxylate(in) = L-erythro-7,8-dihydrobiopterin(in) + a dicarboxylate(out). The enzyme catalyses L-sepiapterin(out) + a dicarboxylate(in) = L-sepiapterin(in) + a dicarboxylate(out). The catalysed reaction is prostaglandin F2alpha(out) + a dicarboxylate(in) = prostaglandin F2alpha(in) + a dicarboxylate(out). It carries out the reaction prostaglandin E2(out) + a dicarboxylate(in) = prostaglandin E2(in) + a dicarboxylate(out). It catalyses the reaction 3',5'-cyclic AMP(out) + a dicarboxylate(in) = 3',5'-cyclic AMP(in) + a dicarboxylate(out). The enzyme catalyses 3',5'-cyclic GMP(out) + a dicarboxylate(in) = 3',5'-cyclic GMP(in) + a dicarboxylate(out). The catalysed reaction is urate(out) + a dicarboxylate(in) = urate(in) + a dicarboxylate(out). It carries out the reaction kynurenate(out) + glutarate(in) = kynurenate(in) + glutarate(out). It catalyses the reaction (indol-3-yl)acetate(out) + a dicarboxylate(in) = (indol-3-yl)acetate(in) + a dicarboxylate(out). The enzyme catalyses indoxyl sulfate(out) + a dicarboxylate(in) = indoxyl sulfate(in) + a dicarboxylate(out). The catalysed reaction is N-benzoylglycine(out) + a dicarboxylate(in) = N-benzoylglycine(in) + a dicarboxylate(out). It carries out the reaction 3-carboxy-4-methyl-5-propyl-2-furanpropanoate(out) + a dicarboxylate(in) = 3-carboxy-4-methyl-5-propyl-2-furanpropanoate(in) + a dicarboxylate(out). Its function is as follows. Secondary active transporter that functions as a Na(+)-independent organic anion (OA)/dicarboxylate antiporter where the uptake of one molecule of OA into the cell is coupled with an efflux of one molecule of intracellular dicarboxylate such as 2-oxoglutarate or glutarate. Mediates the uptake of OA across the basolateral side of proximal tubule epithelial cells, thereby contributing to the renal elimination of endogenous OA from the systemic circulation into the urine. Functions as a biopterin transporters involved in the uptake and the secretion of coenzymes tetrahydrobiopterin (BH4), dihydrobiopterin (BH2) and sepiapterin to urine, thereby determining baseline levels of blood biopterins. Transports prostaglandin E2 (PGE2) and prostaglandin F2-alpha (PGF2-alpha) and may contribute to their renal excretion. Also mediates the uptake of cyclic nucleotides such as cAMP and cGMP. Involved in the transport of neuroactive tryptophan metabolites kynurenate (KYNA) and xanthurenate (XA) and may contribute to their secretion from the brain. May transport glutamate. Also involved in the disposition of uremic toxins and potentially toxic xenobiotics by the renal organic anion secretory pathway, helping reduce their undesired toxicological effects on the body. Uremic toxins include the indoxyl sulfate (IS), hippurate/N-benzoylglycine (HA), indole acetate (IA), 3-carboxy-4- methyl-5-propyl-2-furanpropionate (CMPF) and urate. Xenobiotics include the mycotoxin ochratoxin (OTA). May also contribute to the transport of organic compounds in testes across the blood-testis-barrier. The protein is Solute carrier family 22 member 6 of Bos taurus (Bovine).